The primary structure comprises 256 residues: NAP1-related protein 1 (256 aa).

A coiled-coil region spans residues Ile-23–Lys-64. The interval Leu-220–Glu-256 is disordered. The segment covering Asp-226–Glu-256 has biased composition (acidic residues).

It belongs to the nucleosome assembly protein (NAP) family. As to quaternary structure, can form homomeric and heteromeric protein complexes with NRP2. Binds histones H2A and H2B and associates with chromatin in vivo. In terms of tissue distribution, ubiquitous.

The protein resides in the cytoplasm. It is found in the nucleus. Functionally, acts as a histone H2A/H2B chaperone in nucleosome assembly, playing a critical role for the correct expression of genes involved in root proliferation and patterning. Required with NRP2 for the maintenance of cell proliferation and differentiation in postembryonic root growth. Involved in both intramolecular and intermolecular somatic homologous recombination. This is NAP1-related protein 1 (NRP1) from Arabidopsis thaliana (Mouse-ear cress).